We begin with the raw amino-acid sequence, 268 residues long: Ribosomal RNA small subunit methyltransferase A (268 aa).

Residues Asn-18, Leu-20, Gly-45, Glu-66, Asp-91, and Asn-112 each contribute to the S-adenosyl-L-methionine site.

This sequence belongs to the class I-like SAM-binding methyltransferase superfamily. rRNA adenine N(6)-methyltransferase family. RsmA subfamily.

The protein resides in the cytoplasm. It carries out the reaction adenosine(1518)/adenosine(1519) in 16S rRNA + 4 S-adenosyl-L-methionine = N(6)-dimethyladenosine(1518)/N(6)-dimethyladenosine(1519) in 16S rRNA + 4 S-adenosyl-L-homocysteine + 4 H(+). In terms of biological role, specifically dimethylates two adjacent adenosines (A1518 and A1519) in the loop of a conserved hairpin near the 3'-end of 16S rRNA in the 30S particle. May play a critical role in biogenesis of 30S subunits. This chain is Ribosomal RNA small subunit methyltransferase A, found in Shewanella frigidimarina (strain NCIMB 400).